The chain runs to 79 residues: Small serum protein 3 (79 aa).

The N-terminal stretch at 1 to 19 is a signal peptide; that stretch reads MKVFFILIIFSFTLATCQG. Disulfide bonds link Cys21/Cys72, Cys39/Cys64, and Cys62/Cys71.

The protein resides in the secreted. Its function is as follows. Shows an slight inhibitory effect toward the metalloproteinase brevilysin H6, but does not inhibit the metalloproteinases thermolysin, HR1A and HR1B. This is Small serum protein 3 from Protobothrops flavoviridis (Habu).